Reading from the N-terminus, the 348-residue chain is NADH-ubiquinone oxidoreductase chain 2 (348 aa).

The next 10 helical transmembrane spans lie at 3–23 (PFIL…TFAS), 24–44 (SHWL…IPLM), 60–80 (FITQ…NAWI), 95–115 (ASML…HFWL), 136–156 (LAPF…ITFL), 177–197 (ILAY…QFNQ), 198–218 (QLAL…FMIF), 239–259 (LTAI…LSGF), 273–293 (DIPL…YFYL), and 325–345 (LAIS…TLAL).

This sequence belongs to the complex I subunit 2 family.

Its subcellular location is the mitochondrion inner membrane. It carries out the reaction a ubiquinone + NADH + 5 H(+)(in) = a ubiquinol + NAD(+) + 4 H(+)(out). Functionally, core subunit of the mitochondrial membrane respiratory chain NADH dehydrogenase (Complex I) that is believed to belong to the minimal assembly required for catalysis. Complex I functions in the transfer of electrons from NADH to the respiratory chain. The immediate electron acceptor for the enzyme is believed to be ubiquinone. The chain is NADH-ubiquinone oxidoreductase chain 2 (MT-ND2) from Gadus morhua (Atlantic cod).